Reading from the N-terminus, the 311-residue chain is 1,4-dihydroxy-2-naphthoate octaprenyltransferase (311 aa).

The next 9 helical transmembrane spans lie at L31–V51, L53–F73, T104–S126, L131–A153, F157–I177, I182–L202, L220–A240, I242–L262, and T290–F310.

Belongs to the MenA family. Type 1 subfamily.

The protein localises to the cell membrane. The catalysed reaction is an all-trans-polyprenyl diphosphate + 1,4-dihydroxy-2-naphthoate + H(+) = a 2-demethylmenaquinol + CO2 + diphosphate. It functions in the pathway quinol/quinone metabolism; menaquinone biosynthesis; menaquinol from 1,4-dihydroxy-2-naphthoate: step 1/2. Functionally, conversion of 1,4-dihydroxy-2-naphthoate (DHNA) to demethylmenaquinone (DMK). The protein is 1,4-dihydroxy-2-naphthoate octaprenyltransferase of Bacillus subtilis (strain 168).